Consider the following 372-residue polypeptide: Histidine protein methyltransferase 1 homolog (372 aa).

Disordered stretches follow at residues 30–55 (SKEL…QFDL) and 68–103 (NAAP…AKEH). Residues 39 to 49 (QKGEERDRKCS) show a composition bias toward basic and acidic residues. The segment covering 70-87 (APSQDTDSPLSAASSSRN) has biased composition (polar residues). A phosphoserine mark is found at Ser-72 and Ser-77. His-154 is modified (tele-methylhistidine; by autocatalysis). S-adenosyl-L-methionine contacts are provided by residues 168–172 (IWECT), Gly-195, and 216–218 (QDY). Positions 247-253 (PDVKRCR) match the Nuclear localization signal motif. S-adenosyl-L-methionine is bound by residues 268–270 (GEW) and Ser-293.

It belongs to the methyltransferase superfamily. METTL18 family. In terms of assembly, interacts with GRWD1 and members of the heat shock protein 90 and 70 families; these proteins may possibly be methylation substrates for the enzyme. Post-translationally, monomethylated at His-154 through automethylation. Automethylation at His-154 positively regulates the methyltransferase activity toward RPL3. Probably methylated on other residues.

The protein resides in the cytoplasm. It is found in the cytosol. The protein localises to the nucleus. Its subcellular location is the nucleolus. The enzyme catalyses L-histidyl-[protein] + S-adenosyl-L-methionine = N(tele)-methyl-L-histidyl-[protein] + S-adenosyl-L-homocysteine + H(+). Functionally, protein-L-histidine N-tele-methyltransferase that specifically monomethylates RPL3, thereby regulating translation elongation. Histidine methylation of RPL3 regulates translation elongation by slowing ribosome traversal on tyrosine codons: slower elongation provides enough time for proper folding of synthesized proteins and prevents cellular aggregation of tyrosine-rich proteins. The protein is Histidine protein methyltransferase 1 homolog of Homo sapiens (Human).